The primary structure comprises 101 residues: U1-sicaritoxin-Li1a (101 aa).

The signal sequence occupies residues 1-19 (MRFLVGAVLVVVLVACATA). Residues 20-35 (FESDAETFKSLVVEER) constitute a propeptide that is removed on maturation. Cystine bridges form between Cys-37/Cys-54, Cys-45/Cys-59, Cys-53/Cys-72, and Cys-61/Cys-70. Lys-81 carries the lysine amide modification. Residues 85–101 (ALLLPVETHRLLFPEQW) constitute a propeptide that is removed on maturation.

It belongs to the neurotoxin 28 (Litx) family. Expressed by the venom gland.

It is found in the secreted. In terms of biological role, toxin active against insects (S.frugiperda larvae). May act on sodium (Nav) or calcium channels (Cav). The polypeptide is U1-sicaritoxin-Li1a (Loxosceles intermedia (Brown spider)).